Here is a 258-residue protein sequence, read N- to C-terminus: Tryptophan synthase alpha chain (258 aa).

Residues Glu-52 and Asp-63 each act as proton acceptor in the active site.

The protein belongs to the TrpA family. In terms of assembly, tetramer of two alpha and two beta chains.

The catalysed reaction is (1S,2R)-1-C-(indol-3-yl)glycerol 3-phosphate + L-serine = D-glyceraldehyde 3-phosphate + L-tryptophan + H2O. It functions in the pathway amino-acid biosynthesis; L-tryptophan biosynthesis; L-tryptophan from chorismate: step 5/5. Its function is as follows. The alpha subunit is responsible for the aldol cleavage of indoleglycerol phosphate to indole and glyceraldehyde 3-phosphate. This chain is Tryptophan synthase alpha chain, found in Streptococcus pneumoniae (strain Taiwan19F-14).